The chain runs to 319 residues: MKKSLTNLDLNLLLCLQLLMQERSVTKAAKRMNVTPSAVSKSLAKLRAWFDDPLFVNTPLGLAPTPLMVSMEQSLADWMQMGNQLLDKPHHQTPRGLKFELAAESPLMMIMFNSLSQQIYQRYPQATIKVRNWDYDSLEAITRGEVDIGFTGRESHPRSRELLSLLPLAIDFEVLFSDLPWVWLREDHPALREAWDLDTFLRYPHISICWEQSDTWALDDVLQEMGRKRHIALSLPGFEQSLFMAAQPDHTLIATAPRYCQHYNQLHQLPLVARPLPFDAQQREKLMVPFTLLWHKRNSHNPKIVWLRQAINTLCRRLI.

One can recognise an HTH lysR-type domain in the interval 8–65 (LDLNLLLCLQLLMQERSVTKAAKRMNVTPSAVSKSLAKLRAWFDDPLFVNTPLGLAPT). Residues 25–44 (VTKAAKRMNVTPSAVSKSLA) constitute a DNA-binding region (H-T-H motif).

Belongs to the LysR transcriptional regulatory family.

Involved in anaerobic NO protection. This is HTH-type transcriptional regulator YidZ from Salmonella agona (strain SL483).